The sequence spans 180 residues: NAD(P)H-quinone oxidoreductase subunit I, chloroplastic (180 aa).

4Fe-4S ferredoxin-type domains follow at residues 55–84 (GRIHFEFDKCIACEVCVRVCPIDLPVVDWR) and 95–124 (LNYSIDFGVCIFCGNCVEYCPTSCLSMTEE). Positions 64, 67, 70, 74, 104, 107, 110, and 114 each coordinate [4Fe-4S] cluster.

It belongs to the complex I 23 kDa subunit family. NDH is composed of at least 16 different subunits, 5 of which are encoded in the nucleus. It depends on [4Fe-4S] cluster as a cofactor.

It localises to the plastid. The protein localises to the chloroplast thylakoid membrane. The catalysed reaction is a plastoquinone + NADH + (n+1) H(+)(in) = a plastoquinol + NAD(+) + n H(+)(out). It catalyses the reaction a plastoquinone + NADPH + (n+1) H(+)(in) = a plastoquinol + NADP(+) + n H(+)(out). In terms of biological role, NDH shuttles electrons from NAD(P)H:plastoquinone, via FMN and iron-sulfur (Fe-S) centers, to quinones in the photosynthetic chain and possibly in a chloroplast respiratory chain. The immediate electron acceptor for the enzyme in this species is believed to be plastoquinone. Couples the redox reaction to proton translocation, and thus conserves the redox energy in a proton gradient. The polypeptide is NAD(P)H-quinone oxidoreductase subunit I, chloroplastic (Triticum aestivum (Wheat)).